The chain runs to 569 residues: Alpha-keto-acid decarboxylase (569 aa).

E57 contacts thiamine diphosphate. The thiamine pyrophosphate binding stretch occupies residues 392-474; that stretch reads TAFYGMVEHR…VVVNNDGYTI (83 aa). Mg(2+) is bound by residues D442, N469, and G471.

Belongs to the TPP enzyme family. The cofactor is a metal cation. Thiamine diphosphate serves as cofactor.

Decarboxylates branched-chain and aromatic alpha-keto acids to aldehydes. The polypeptide is Alpha-keto-acid decarboxylase (kdc) (Mycobacterium leprae (strain TN)).